The following is a 294-amino-acid chain: RAB7A-interacting MON1-CCZ1 complex subunit 1 (294 aa).

The residue at position 2 (alanine 2) is an N-acetylalanine.

Belongs to the RIMOC1 family. In terms of assembly, interacts with the MON1A-CCZ1B complex. Interacts with GDP-bound RAB7A and promotes its interaction with the MON1A-CCZ1B complex.

It localises to the cytoplasm. It is found in the cytosol. In terms of biological role, plays an important role in the removal of damaged mitochondria via mitophagy by controlling the stability and localization of RAB7A. Required for the recruitment of RAB7A and ATG9A vesicles to damaged mitochondria and promotes the stability of RAB7A by inhibiting its proteasomal degradation during mitophagy. This chain is RAB7A-interacting MON1-CCZ1 complex subunit 1, found in Homo sapiens (Human).